Consider the following 263-residue polypeptide: Protein PYRICULARIA ORYZAE RESISTANCE 21 (263 aa).

Positions 1 to 68 constitute an HMA domain; the sequence is MGILVISVDL…IWCKAGKIIK (68 aa). The a metal cation site is built by Cys-12 and Cys-15. Residues 126–153 form a disordered region; the sequence is CEKPKPCEKPPPCKPEEPPKPPPEKPPP. Positions 139-153 are enriched in basic and acidic residues; the sequence is KPEEPPKPPPEKPPP.

In terms of biological role, involved in defense responses. Contributes to slowing defense responses toward Magnaporthe oryzae. The sequence is that of Protein PYRICULARIA ORYZAE RESISTANCE 21 from Oryza sativa subsp. indica (Rice).